The following is an 81-amino-acid chain: Translational regulator CsrA (81 aa).

Positions 59-71 are enriched in polar residues; that stretch reads SQMQHLEQGNFPT. A disordered region spans residues 59–81; that stretch reads SQMQHLEQGNFPTSFDDDDFFNR.

This sequence belongs to the CsrA/RsmA family. Homodimer; the beta-strands of each monomer intercalate to form a hydrophobic core, while the alpha-helices form wings that extend away from the core.

Its subcellular location is the cytoplasm. In terms of biological role, a key translational regulator that binds mRNA to regulate translation initiation and/or mRNA stability. Mediates global changes in gene expression, shifting from rapid growth to stress survival by linking envelope stress, the stringent response and the catabolite repression systems. Usually binds in the 5'-UTR; binding at or near the Shine-Dalgarno sequence prevents ribosome-binding, repressing translation, binding elsewhere in the 5'-UTR can activate translation and/or stabilize the mRNA. Its function is antagonized by small RNA(s). In Psychrobacter sp. (strain PRwf-1), this protein is Translational regulator CsrA.